We begin with the raw amino-acid sequence, 486 residues long: O-methyltransferase gedA (486 aa).

S-adenosyl-L-methionine is bound by residues G298–G299, D321, S353–F354, and R369. H373 serves as the catalytic Proton acceptor.

It belongs to the class I-like SAM-binding methyltransferase superfamily. Cation-independent O-methyltransferase family.

It carries out the reaction emodin + S-adenosyl-L-methionine = questin + S-adenosyl-L-homocysteine + H(+). The protein operates within secondary metabolite biosynthesis. O-methyltransferase; part of the gene cluster that mediates the biosynthesis of geodin, an intermediate in the biosynthesis of other natural products. The pathway begins with the synthesis of atrochrysone thioester by the polyketide synthase (PKS) gedC. The atrochrysone carboxyl ACP thioesterase gedB then breaks the thioester bond and releases the atrochrysone carboxylic acid from gedC. The atrochrysone carboxylic acid is then converted to atrochrysone which is further transformed into emodinanthrone. The next step is performed by the emodinanthrone oxygenase gedH that catalyzes the oxidation of emodinanthrone to emodin. Emodin O-methyltransferase encoded probably by gedA then catalyzes methylation of the 8-hydroxy group of emodin to form questin. Ring cleavage of questin by questin oxidase gedK leads to desmethylsulochrin via several intermediates including questin epoxide. Another methylation step probably catalyzed by methyltransferase gedG leads to the formation of sulochrin which is further converted to dihydrogeodin by the sulochrin halogenase gedL. Finally, the dihydrogeodin oxidase gedJ catalyzes the stereospecific phenol oxidative coupling reaction converting dihydrogeodin to geodin. This is O-methyltransferase gedA from Aspergillus terreus (strain NIH 2624 / FGSC A1156).